The chain runs to 142 residues: Hemoglobin subunit alpha (142 aa).

The region spanning 2–142 is the Globin domain; the sequence is VLSPADKTNI…VSTVLTSKYR (141 aa). The residue at position 4 (Ser-4) is a Phosphoserine. Residue Lys-8 is modified to N6-succinyllysine. Thr-9 is modified (phosphothreonine). N6-succinyllysine is present on Lys-12. Position 17 is an N6-acetyllysine; alternate (Lys-17). At Lys-17 the chain carries N6-succinyllysine; alternate. Tyr-25 carries the phosphotyrosine modification. Phosphoserine is present on Ser-36. Position 41 is an N6-succinyllysine (Lys-41). Ser-50 carries the post-translational modification Phosphoserine. His-59 serves as a coordination point for O2. Heme b is bound at residue His-88. Position 103 is a phosphoserine (Ser-103). At Thr-109 the chain carries Phosphothreonine. At Ser-125 the chain carries Phosphoserine. 2 positions are modified to phosphothreonine: Thr-135 and Thr-138. Ser-139 is subject to Phosphoserine.

This sequence belongs to the globin family. Heterotetramer of two alpha chains and two beta chains. As to expression, red blood cells.

Involved in oxygen transport from the lung to the various peripheral tissues. Its function is as follows. Hemopressin acts as an antagonist peptide of the cannabinoid receptor CNR1. Hemopressin-binding efficiently blocks cannabinoid receptor CNR1 and subsequent signaling. This is Hemoglobin subunit alpha (HBA) from Canis latrans (Coyote).